The sequence spans 1216 residues: AF4/FMR2 family member 1 (1216 aa).

Disordered regions lie at residues 1-52, 68-104, 116-139, 152-217, 244-275, and 352-728; these read MAAH…KGDE, KEFL…GAAS, IHTS…AQPR, PRLT…VSSK, AVTS…MQQK, and SWPP…RTSG. 2 stretches are compositionally biased toward basic and acidic residues: residues 9-35 and 78-99; these read NEDR…EAFP and HRLD…HDRG. Residues 166–182 show a composition bias toward basic and acidic residues; the sequence is RKCDRRAEGDSAPERKL. Phosphoserine occurs at positions 183, 191, and 197. Low complexity predominate over residues 207–217; it reads SKAHSSGVSSK. A compositionally biased stretch (pro residues) spans 252-266; that stretch reads PPQPPCQTFPPPPLP. Residues 383–406 show a composition bias toward polar residues; that stretch reads PATQSQKQYDTPSKTHPNPQQGTS. The segment covering 408–424 has biased composition (acidic residues); it reads LEDDLQLSDSEDSDTEQ. Pro residues predominate over residues 429-438; that stretch reads PPSPPAPPSA. Residues 457-484 are compositionally biased toward acidic residues; that stretch reads ESSESDSSSDSESESSSSDSEEEEENEP. Residue Lys-682 is modified to N6-acetyllysine. Over residues 710 to 728 the composition is skewed to low complexity; sequence SQGPSHSSRGSSGSVRTSG. Ser-755 and Ser-760 each carry phosphoserine. Disordered stretches follow at residues 777–969 and 1094–1125; these read RIPQ…RQQA and APSP…QSSA. Positions 789 to 808 are enriched in basic and acidic residues; sequence RKAEDKQLSAGKKQDSETKS. 4 stretches are compositionally biased toward low complexity: residues 824 to 846, 867 to 886, 902 to 915, and 1115 to 1125; these read KKST…SSHT, PPAS…PSRP, PPRS…SSTD, and PASSVGSQSSA.

It belongs to the AF4 family. In terms of assembly, component of the super elongation complex (SEC), at least composed of EAF1, EAF2, CDK9, MLLT3/AF9, AFF (AFF1 or AFF4), the P-TEFb complex and ELL (ELL, ELL2 or ELL3).

Its subcellular location is the nucleus. This Mus musculus (Mouse) protein is AF4/FMR2 family member 1 (Aff1).